Here is a 779-residue protein sequence, read N- to C-terminus: DNA topoisomerase 1 (779 aa).

The Toprim domain maps to 1 to 111 (MKLVIVESPA…VESDDFFKRV (111 aa)). Mg(2+) contacts are provided by E7 and D80. Residues 132–568 (DTNLVNAQQA…FWSGFNNNIE (437 aa)) form the Topo IA-type catalytic domain. The interaction with DNA stretch occupies residues 166-171 (SAGRVQ). The active-site O-(5'-phospho-DNA)-tyrosine intermediate is Y304. The C4-type zinc finger occupies 600–627 (CPSCKTGQLSLKLGKFGAFLACSNYPEC).

The protein belongs to the type IA topoisomerase family. In terms of assembly, monomer. It depends on Mg(2+) as a cofactor.

It carries out the reaction ATP-independent breakage of single-stranded DNA, followed by passage and rejoining.. Functionally, releases the supercoiling and torsional tension of DNA, which is introduced during the DNA replication and transcription, by transiently cleaving and rejoining one strand of the DNA duplex. Introduces a single-strand break via transesterification at a target site in duplex DNA. The scissile phosphodiester is attacked by the catalytic tyrosine of the enzyme, resulting in the formation of a DNA-(5'-phosphotyrosyl)-enzyme intermediate and the expulsion of a 3'-OH DNA strand. The free DNA strand then undergoes passage around the unbroken strand, thus removing DNA supercoils. Finally, in the religation step, the DNA 3'-OH attacks the covalent intermediate to expel the active-site tyrosine and restore the DNA phosphodiester backbone. This Rickettsia typhi (strain ATCC VR-144 / Wilmington) protein is DNA topoisomerase 1.